Here is a 436-residue protein sequence, read N- to C-terminus: Mannitol-binding protein (436 aa).

The N-terminal stretch at 1 to 22 is a signal peptide; that stretch reads MNDSIKACLAAACLALPLLAQG.

The protein belongs to the bacterial solute-binding protein 1 family.

The protein resides in the periplasm. Functionally, binds mannitol with high affinity. The sequence is that of Mannitol-binding protein from Pseudomonas aeruginosa (strain ATCC 15692 / DSM 22644 / CIP 104116 / JCM 14847 / LMG 12228 / 1C / PRS 101 / PAO1).